Here is a 269-residue protein sequence, read N- to C-terminus: 4-hydroxy-tetrahydrodipicolinate reductase (269 aa).

Residues 8 to 13, 98 to 100, and 122 to 125 each bind NAD(+); these read GVAGRM, GTT, and APNM. His-156 serves as the catalytic Proton donor/acceptor. His-157 lines the (S)-2,3,4,5-tetrahydrodipicolinate pocket. Catalysis depends on Lys-160, which acts as the Proton donor. 166–167 provides a ligand contact to (S)-2,3,4,5-tetrahydrodipicolinate; the sequence is GT.

It belongs to the DapB family.

It is found in the cytoplasm. The catalysed reaction is (S)-2,3,4,5-tetrahydrodipicolinate + NAD(+) + H2O = (2S,4S)-4-hydroxy-2,3,4,5-tetrahydrodipicolinate + NADH + H(+). The enzyme catalyses (S)-2,3,4,5-tetrahydrodipicolinate + NADP(+) + H2O = (2S,4S)-4-hydroxy-2,3,4,5-tetrahydrodipicolinate + NADPH + H(+). It functions in the pathway amino-acid biosynthesis; L-lysine biosynthesis via DAP pathway; (S)-tetrahydrodipicolinate from L-aspartate: step 4/4. Its function is as follows. Catalyzes the conversion of 4-hydroxy-tetrahydrodipicolinate (HTPA) to tetrahydrodipicolinate. The protein is 4-hydroxy-tetrahydrodipicolinate reductase of Chromohalobacter salexigens (strain ATCC BAA-138 / DSM 3043 / CIP 106854 / NCIMB 13768 / 1H11).